We begin with the raw amino-acid sequence, 135 residues long: MACGLVASNLNLKPGECLKVRGEVAPDAKSFVLNLGKDSNNLCLHFNPRFNAHGDANTIVCNSKDNGAWGTEHREPAFPFQPGSTVEVCITFDQADLTIKLPDGHEFKFPNRLNMEAINYMAADGDFKIKCVAFE.

Alanine 2 is modified (N-acetylalanine). One can recognise a Galectin domain in the interval 4–135; that stretch reads GLVASNLNLK…DFKIKCVAFE (132 aa). N6-acetyllysine occurs at positions 13, 19, and 29. Serine 30 is subject to Phosphoserine. A beta-D-galactoside is bound by residues 45 to 49, histidine 53, asparagine 62, and 69 to 72; these read HFNPR and WGTE. The residue at position 108 (lysine 108) is an N6-acetyllysine; alternate. Lysine 108 bears the N6-succinyllysine; alternate mark. Lysine 128 carries the post-translational modification N6-acetyllysine.

As to quaternary structure, binds LGALS3BP. Interacts with CD2, CD3, CD4, CD6, CD7, CD43, ALCAM and CD45. Interacts with laminin. Interacts with SUSD2. Exists in a reversible and active monomer-homodimer equilibrium, the mononomer/dimer state is regulated by lectin concentration. Interacts with cargo receptor TMED10; the interaction mediates the translocation from the cytoplasm into the ERGIC (endoplasmic reticulum-Golgi intermediate compartment) and thereby secretion.

It localises to the cytoplasm. Its subcellular location is the secreted. The protein resides in the extracellular space. The protein localises to the extracellular matrix. Its function is as follows. Lectin that binds beta-galactoside and a wide array of complex carbohydrates. Plays a role in regulating apoptosis, cell proliferation and cell differentiation. Inhibits CD45 protein phosphatase activity and therefore the dephosphorylation of Lyn kinase. Strong inducer of T-cell apoptosis. In Cricetulus griseus (Chinese hamster), this protein is Galectin-1 (LGALS1).